We begin with the raw amino-acid sequence, 602 residues long: DNA mismatch repair protein MutL (602 aa).

The disordered stretch occupies residues 337–367 (KRPFPGSSTNYSGIQQDTKKQESDNPEKARG). The span at 342 to 352 (GSSTNYSGIQQ) shows a compositional bias: polar residues. Positions 353-367 (DTKKQESDNPEKARG) are enriched in basic and acidic residues.

Belongs to the DNA mismatch repair MutL/HexB family.

In terms of biological role, this protein is involved in the repair of mismatches in DNA. It is required for dam-dependent methyl-directed DNA mismatch repair. May act as a 'molecular matchmaker', a protein that promotes the formation of a stable complex between two or more DNA-binding proteins in an ATP-dependent manner without itself being part of a final effector complex. The sequence is that of DNA mismatch repair protein MutL from Kosmotoga olearia (strain ATCC BAA-1733 / DSM 21960 / TBF 19.5.1).